The chain runs to 277 residues: Ras suppressor protein 1 (277 aa).

Residues 1 to 23 form a disordered region; the sequence is MSKSLKKLVEESREKNQPEVDMS. S2 is modified (N-acetylserine). Positions 7–23 are enriched in basic and acidic residues; sequence KLVEESREKNQPEVDMS. 7 LRR repeats span residues 41–63, 64–85, 87–109, 110–133, 135–156, 158–179, and 181–202; these read HITQ…AELK, NLEV…ISSL, KLKH…GSLP, ALEV…FFYL, TLRA…IGKL, KLQI…IGEL, and QLKE…LGNL. Positions 250-277 are disordered; that stretch reads MQANPEPPKKNNDKSKKISRKPLAAKNK. Residues 256–265 are compositionally biased toward basic and acidic residues; that stretch reads PPKKNNDKSK.

Its function is as follows. Potentially plays a role in the Ras signal transduction pathway. Capable of suppressing v-Ras transformation in vitro. The chain is Ras suppressor protein 1 (RSU1) from Bos taurus (Bovine).